Consider the following 118-residue polypeptide: MLDSLKQKKNFQRIKMRIKTGDLVKVINGKEKGKTGEVLKTIPLENRVVVKGINLRTKHVKPTQEGETGRILTEEASLHASNVMFFSKEKNLTSKIEYFIDKEGVKKRRLKKTGEVID.

The protein belongs to the universal ribosomal protein uL24 family. As to quaternary structure, part of the 50S ribosomal subunit.

Functionally, one of two assembly initiator proteins, it binds directly to the 5'-end of the 23S rRNA, where it nucleates assembly of the 50S subunit. Its function is as follows. One of the proteins that surrounds the polypeptide exit tunnel on the outside of the subunit. The polypeptide is Large ribosomal subunit protein uL24 (Prochlorococcus marinus (strain MIT 9301)).